A 207-amino-acid polypeptide reads, in one-letter code: Casparian strip membrane protein 1 (207 aa).

Residues 1 to 12 (MEADSTTINVTE) show a composition bias toward polar residues. The interval 1 to 20 (MEADSTTINVTETPKERKGK) is disordered. At 1–48 (MEADSTTINVTETPKERKGKAPLLAAPPASSGVKRVLQKAPKGGYKRG) the chain is on the cytoplasmic side. Residues 49–69 (LAVFDVVLRLAGIATALGAAI) form a helical membrane-spanning segment. The Extracellular segment spans residues 70-98 (AMGSTDQTLPFFTQFFQFKAEFDDLPAFT). A helical transmembrane segment spans residues 99-119 (FFVIANAITAAYLALTIPISI). The Cytoplasmic segment spans residues 120–131 (VCIIRPHLVAPR). The helical transmembrane segment at 132 to 152 (VLLIFLDTVMVALTTAAAGGT) threads the bilayer. Residues 153-184 (ASIVYLAHNGNSDANWPAICQQFNDXCQKVSG) are Extracellular-facing. The helical transmembrane segment at 185–205 (AVVASFLTVVVLMLLIVLSAF) threads the bilayer. Residues 206–207 (AL) are Cytoplasmic-facing.

Belongs to the Casparian strip membrane proteins (CASP) family. Homodimer and heterodimers.

It localises to the cell membrane. Its function is as follows. Regulates membrane-cell wall junctions and localized cell wall deposition. Required for establishment of the Casparian strip membrane domain (CSD) and the subsequent formation of Casparian strips, a cell wall modification of the root endodermis that determines an apoplastic barrier between the intraorganismal apoplasm and the extraorganismal apoplasm and prevents lateral diffusion. This is Casparian strip membrane protein 1 from Cynara cardunculus var. scolymus (Globe artichoke).